The following is a 127-amino-acid chain: Fluoride-specific ion channel FluC (127 aa).

The next 4 helical transmembrane spans lie at 4 to 24 (LLLAVFIGGGTGSVARWLLSM), 35 to 55 (LGTLAANLIGAFIIGMGFAWF), 71 to 91 (TGFCGGLTTFSTFSAEVVFLL), and 103 to 123 (VFVNLLGSFAMTALAFWLFSA). Na(+)-binding residues include G75 and T78.

Belongs to the fluoride channel Fluc/FEX (TC 1.A.43) family.

The protein resides in the cell inner membrane. The catalysed reaction is fluoride(in) = fluoride(out). Na(+) is not transported, but it plays an essential structural role and its presence is essential for fluoride channel function. Functionally, fluoride-specific ion channel. Important for reducing fluoride concentration in the cell, thus reducing its toxicity. The sequence is that of Fluoride-specific ion channel FluC from Escherichia coli O17:K52:H18 (strain UMN026 / ExPEC).